The chain runs to 215 residues: MSKVYDWFEERLEIQAIADDITSKYVPPHVNIFYCLGGITLTCFLVQVATGFAMTFYYRPTVTEAFSSVQYIMTEANFGWLIRSVHRWSASMMVLMMILHVFRVYLTGGFKKPRELTWVTGVVLAVLTASFGVTGYSLPWDQIGYWAVKIVTGVPEAIPVIGSPLVELLRGSASVGQSTLTRFYSLHTFVLPLLTAVFMLMHFPMIRKQGISGPL.

Residues 32–52 form a helical membrane-spanning segment; that stretch reads IFYCLGGITLTCFLVQVATGF. C35 lines the heme c pocket. 2 residues coordinate heme b: H86 and H100. The next 3 helical transmembrane spans lie at 90–110, 116–136, and 186–206; these read ASMM…TGGF, LTWV…VTGY, and LHTF…FPMI. Positions 187 and 202 each coordinate heme b.

Belongs to the cytochrome b family. PetB subfamily. In terms of assembly, the 4 large subunits of the cytochrome b6-f complex are cytochrome b6, subunit IV (17 kDa polypeptide, PetD), cytochrome f and the Rieske protein, while the 4 small subunits are PetG, PetL, PetM and PetN. The complex functions as a dimer. Heme b serves as cofactor. Heme c is required as a cofactor.

The protein resides in the plastid. The protein localises to the chloroplast thylakoid membrane. Functionally, component of the cytochrome b6-f complex, which mediates electron transfer between photosystem II (PSII) and photosystem I (PSI), cyclic electron flow around PSI, and state transitions. This is Cytochrome b6 from Saccharum hybrid (Sugarcane).